The sequence spans 322 residues: 4-hydroxythreonine-4-phosphate dehydrogenase (322 aa).

Residue threonine 132 coordinates substrate. 3 residues coordinate a divalent metal cation: histidine 160, histidine 205, and histidine 260. Residues lysine 268, asparagine 277, and arginine 286 each coordinate substrate.

Belongs to the PdxA family. Homodimer. It depends on Zn(2+) as a cofactor. Requires Mg(2+) as cofactor. Co(2+) serves as cofactor.

The protein resides in the cytoplasm. The enzyme catalyses 4-(phosphooxy)-L-threonine + NAD(+) = 3-amino-2-oxopropyl phosphate + CO2 + NADH. It functions in the pathway cofactor biosynthesis; pyridoxine 5'-phosphate biosynthesis; pyridoxine 5'-phosphate from D-erythrose 4-phosphate: step 4/5. In terms of biological role, catalyzes the NAD(P)-dependent oxidation of 4-(phosphooxy)-L-threonine (HTP) into 2-amino-3-oxo-4-(phosphooxy)butyric acid which spontaneously decarboxylates to form 3-amino-2-oxopropyl phosphate (AHAP). This is 4-hydroxythreonine-4-phosphate dehydrogenase from Xanthomonas campestris pv. campestris (strain 8004).